The primary structure comprises 387 residues: Exodeoxyribonuclease 7 large subunit (387 aa).

This sequence belongs to the XseA family. In terms of assembly, heterooligomer composed of large and small subunits.

It localises to the cytoplasm. It carries out the reaction Exonucleolytic cleavage in either 5'- to 3'- or 3'- to 5'-direction to yield nucleoside 5'-phosphates.. Functionally, bidirectionally degrades single-stranded DNA into large acid-insoluble oligonucleotides, which are then degraded further into small acid-soluble oligonucleotides. The sequence is that of Exodeoxyribonuclease 7 large subunit from Campylobacter jejuni subsp. jejuni serotype O:6 (strain 81116 / NCTC 11828).